The following is a 296-amino-acid chain: Complex I intermediate-associated protein 30, mitochondrial (296 aa).

A mitochondrion-targeting transit peptide spans 1–29 (MNSLLRQGLRLGCCLPAVQQQIHTTAVHR).

The protein belongs to the CIA30 family. Associates with mitochondrial complex I assembly intermediates during its biogenesis.

It is found in the mitochondrion. Functionally, chaperone protein involved in the assembly of the mitochondrial NADH:ubiquinone oxidoreductase complex (complex I). This chain is Complex I intermediate-associated protein 30, mitochondrial, found in Drosophila melanogaster (Fruit fly).